The chain runs to 232 residues: Large ribosomal subunit protein uL1 (232 aa).

Belongs to the universal ribosomal protein uL1 family. Part of the 50S ribosomal subunit.

Its function is as follows. Binds directly to 23S rRNA. The L1 stalk is quite mobile in the ribosome, and is involved in E site tRNA release. Functionally, protein L1 is also a translational repressor protein, it controls the translation of the L11 operon by binding to its mRNA. This Parabacteroides distasonis (strain ATCC 8503 / DSM 20701 / CIP 104284 / JCM 5825 / NCTC 11152) protein is Large ribosomal subunit protein uL1.